The sequence spans 256 residues: Triosephosphate isomerase (256 aa).

Position 12–14 (12–14) interacts with substrate; the sequence is NWK. The active-site Electrophile is the His-99. The active-site Proton acceptor is Glu-171. Residues Gly-177, Ser-217, and 238–239 contribute to the substrate site; that span reads GG.

This sequence belongs to the triosephosphate isomerase family. As to quaternary structure, homodimer.

The protein resides in the cytoplasm. The catalysed reaction is D-glyceraldehyde 3-phosphate = dihydroxyacetone phosphate. It participates in carbohydrate biosynthesis; gluconeogenesis. Its pathway is carbohydrate degradation; glycolysis; D-glyceraldehyde 3-phosphate from glycerone phosphate: step 1/1. Functionally, involved in the gluconeogenesis. Catalyzes stereospecifically the conversion of dihydroxyacetone phosphate (DHAP) to D-glyceraldehyde-3-phosphate (G3P). This chain is Triosephosphate isomerase, found in Rubrobacter xylanophilus (strain DSM 9941 / JCM 11954 / NBRC 16129 / PRD-1).